The primary structure comprises 243 residues: Vesicle-associated membrane protein-associated protein B (243 aa).

Position 2 is an N-acetylalanine (A2). The Cytoplasmic portion of the chain corresponds to 2–218 (AKVEQVLSLE…PAPATPGKEE (217 aa)). Residues 7-124 (VLSLEPQHEL…MDSKLRCVFE (118 aa)) enclose the MSP domain. S146 carries the phosphoserine modification. K147 participates in a covalent cross-link: Glycyl lysine isopeptide (Lys-Gly) (interchain with G-Cter in SUMO1). T150 is subject to Phosphothreonine. Residues S158 and S159 each carry the phosphoserine modification. Residues 161 to 196 (LDDTEVKKVMEECKRLQSEVQRLREENKQLKEEDGL) are a coiled coil. The span at 185 to 197 (EENKQLKEEDGLR) shows a compositional bias: basic and acidic residues. A disordered region spans residues 185–217 (EENKQLKEEDGLRMRKPVLSNSPAPAPATPGKE). Position 206 is a phosphoserine (S206). A helical; Anchor for type IV membrane protein membrane pass occupies residues 219–239 (GLSTRLLALVVLFFIVGVIIG).

It belongs to the VAMP-associated protein (VAP) (TC 9.B.17) family. In terms of assembly, homodimer, and heterodimer with VAPA. Interacts with VAMP1 and VAMP2. Interacts (via MSP domain) with ZFYVE27. Interacts with RMDN3. Interacts with KIF5A in a ZFYVE27-dependent manner. Interacts (via MSP domain) with STARD3 (via phospho-FFAT motif). Interacts with STARD3NL (via FFAT motif). Interacts with CERT1. Interacts with PLEKHA3 and SACM1L to form a ternary complex. Interacts with VPS13A (via FFAT motif). Interacts with RB1CC1 (via phosphorylated FFAT motif), MIGA2 (via phosphorylated FFAT motif), RMDN3 (via phosphorylated FFAT motif), OSBPL1A (via FFAT motif), KCNB1 (via phosphorylated FFAT motif) and KCNB2 (via phosphorylated FFAT motif). Interacts (via MSP domain) with WDR44 (via FFAT motif); the interactions connect the endoplasmic reticulum (ER) with the endosomal tubule.

It localises to the endoplasmic reticulum membrane. Endoplasmic reticulum (ER)-anchored protein that mediates the formation of contact sites between the ER and endosomes via interaction with FFAT motif-containing proteins such as STARD3 or WDR44. Interacts with STARD3 in a FFAT motif phosphorylation dependent manner. Via interaction with WDR44 participates in neosynthesized protein export. Participates in the endoplasmic reticulum unfolded protein response (UPR) by inducing ERN1/IRE1 activity. Involved in cellular calcium homeostasis regulation. This is Vesicle-associated membrane protein-associated protein B from Sus scrofa (Pig).